Consider the following 375-residue polypeptide: Growth/differentiation factor 8 (375 aa).

Residues 1–23 (MQKLAVYVYIYLFVQISVDPVAL) form the signal peptide. Residues 24 to 266 (DGSSQPTENT…VTDTPKRSRR (243 aa)) constitute a propeptide that is removed on maturation. A glycan (N-linked (GlcNAc...) asparagine) is linked at N71. 4 disulfides stabilise this stretch: C272–C282, C281–C340, C309–C372, and C313–C374.

Belongs to the TGF-beta family. Homodimer; disulfide-linked.

The protein localises to the secreted. In terms of biological role, acts specifically as a negative regulator of skeletal muscle growth. The chain is Growth/differentiation factor 8 (MSTN) from Excalfactoria chinensis (Blue-breasted quail).